The following is a 1472-amino-acid chain: ABC transporter FGM5 (1472 aa).

The next 11 helical transmembrane spans lie at 32 to 52, 67 to 87, 100 to 120, 163 to 183, 197 to 217, 271 to 291, 316 to 336, 386 to 406, 412 to 432, 493 to 513, and 534 to 554; these read IILG…RVAT, FTKL…LILS, FAVA…ALSF, YAGV…LELQ, SPEE…IGIF, ALIV…GFQY, GLIG…ALFW, FHGL…CFLL, LAFI…TAIA, LLIM…VVAF, and LLTN…AAFV. Positions 284–551 constitute an ABC transmembrane type-1 1 domain; it reads IAMIGFQYAQ…MFQSVPAVIA (268 aa). An ABC transporter 1 domain is found at 605–834; it reads ISIVDGSFGW…GIYIPTLGLS (230 aa). 638 to 645 is an ATP binding site; that stretch reads GPVASGKS. N-linked (GlcNAc...) asparagine glycans are attached at residues Asn682, Asn696, Asn763, Asn784, and Asn843. Transmembrane regions (helical) follow at residues 900 to 920, 938 to 958, 1003 to 1023, and 1024 to 1044; these read LLSG…MGWW, LFRG…VIFM, GELP…FAMA, and VVVA…FSII. In terms of domain architecture, ABC transmembrane type-1 2 spans 900-1139; sequence LLSGIMYAVG…VGVVAISTQL (240 aa). The N-linked (GlcNAc...) asparagine glycan is linked to Asn1101. A helical transmembrane segment spans residues 1116–1136; sequence FLATFLNLIVMVLAVGVVAIS. In terms of domain architecture, ABC transporter 2 spans 1218-1468; it reads YKNDDESPAS…EGSWFSQLWA (251 aa). Residue 1255–1262 coordinates ATP; sequence GRTGSGKS. N-linked (GlcNAc...) asparagine glycosylation is found at Asn1277 and Asn1293.

The protein belongs to the ABC transporter superfamily. ABCC family. Conjugate transporter (TC 3.A.1.208) subfamily.

It localises to the cell membrane. Its pathway is secondary metabolite biosynthesis. In terms of biological role, ABC transporter; part of the Fg3_54/C64 gene cluster that mediates the biosynthesis of the octapeptide fusaoctaxin A, a virulence factor that is required for cell-to-cell invasiveness of plant host. The 2 nonribosomal peptide synthetases NRPS9 and NRPS5 form an assembly line which likely utilizes GABA as a starter unit (loaded on the unique module M1 of NRPS9) and sequentially incorporates seven extender units composed of the residues L-Ala, L-allo-Ile, L-Ser, L-Val, L-Ser, L-Leu and L-Leu, respectively. During the process, each of the residues that are tethered on modules M3-M7 of NRPS5 containing an E domain can undergo an epimerization reaction to produce a D-configuration before the transpeptidation reaction occurs. The elongation of the peptidyl chain might be terminated by module M8-mediated L-Leu incorporation, followed by R domain-catalyzed 4 electron reduction to release the resulting octapeptide from the assembly line as an alcohol. Fusaoctaxin A is cleaved by the cluster specific ABC transporter FGM5 to the pentapeptide fusapentaxin A and the tripeptide fusatrixin A. The other enzymes from the cluster, FGM1, FGM2, FGM3 and FGM9 seem not to be involved in the biosynthesis of fusaoctaxin A and their functions have still to be determined. In Gibberella zeae (strain ATCC MYA-4620 / CBS 123657 / FGSC 9075 / NRRL 31084 / PH-1) (Wheat head blight fungus), this protein is ABC transporter FGM5.